We begin with the raw amino-acid sequence, 77 residues long: Large ribosomal subunit protein eL14 (77 aa).

The protein belongs to the eukaryotic ribosomal protein eL14 family.

The protein is Large ribosomal subunit protein eL14 of Methanococcus vannielii (strain ATCC 35089 / DSM 1224 / JCM 13029 / OCM 148 / SB).